The primary structure comprises 115 residues: Large ribosomal subunit protein bL20 (115 aa).

It belongs to the bacterial ribosomal protein bL20 family.

Its function is as follows. Binds directly to 23S ribosomal RNA and is necessary for the in vitro assembly process of the 50S ribosomal subunit. It is not involved in the protein synthesizing functions of that subunit. The sequence is that of Large ribosomal subunit protein bL20 from Synechococcus sp. (strain WH7803).